Here is a 137-residue protein sequence, read N- to C-terminus: Phospholipase A2 homolog PLA2-03 (137 aa).

An N-terminal signal peptide occupies residues 1–16 (MRTLWIVAVLLVGVEG). Cystine bridges form between C42/C131, C44/C60, C59/C111, C65/C137, C66/C104, C73/C97, and C91/C102. The important for membrane-damaging activities in eukaryotes and bacteria; heparin-binding stretch occupies residues 121 to 133 (KKYKIFPKFLCKK).

The protein belongs to the phospholipase A2 family. Group II subfamily. K49 sub-subfamily. In terms of tissue distribution, expressed by the venom gland.

Its subcellular location is the secreted. Snake venom phospholipase A2 homolog that lacks enzymatic activity. Is myotoxic and displays edema-inducing activities in mouse paw. A model of myotoxic mechanism has been proposed: an apo Lys49-PLA2 is activated by the entrance of a hydrophobic molecule (e.g. fatty acid) at the hydrophobic channel of the protein leading to a reorientation of a monomer. This reorientation causes a transition between 'inactive' to 'active' states, causing alignment of C-terminal and membrane-docking sites (MDoS) side-by-side and putting the membrane-disruption sites (MDiS) in the same plane, exposed to solvent and in a symmetric position for both monomers. The MDoS region stabilizes the toxin on membrane by the interaction of charged residues with phospholipid head groups. Subsequently, the MDiS region destabilizes the membrane with penetration of hydrophobic residues. This insertion causes a disorganization of the membrane, allowing an uncontrolled influx of ions (i.e. calcium and sodium), and eventually triggering irreversible intracellular alterations and cell death. This chain is Phospholipase A2 homolog PLA2-03, found in Ovophis okinavensis (Ryukyu Island pit viper).